We begin with the raw amino-acid sequence, 158 residues long: Endoribonuclease YbeY (158 aa).

Residues His119, His123, and Asp129 each contribute to the Zn(2+) site.

This sequence belongs to the endoribonuclease YbeY family. It depends on Zn(2+) as a cofactor.

It is found in the cytoplasm. Single strand-specific metallo-endoribonuclease involved in late-stage 70S ribosome quality control and in maturation of the 3' terminus of the 16S rRNA. The protein is Endoribonuclease YbeY of Chlamydia felis (strain Fe/C-56) (Chlamydophila felis).